We begin with the raw amino-acid sequence, 351 residues long: Molybdate-binding protein MolA (351 aa).

The signal sequence occupies residues 1–21 (MKLKSLLIACLLSSLSFSALA). A Fe/B12 periplasmic-binding domain is found at 41–322 (RAVVLQHQTL…WLAKALYPQR (282 aa)). Molybdate is bound by residues 47–48 (HQ), Tyr-217, Arg-264, and 300–301 (GY).

The protein belongs to the bacterial solute-binding protein 8 family. The complex is composed of two ATP-binding proteins (MolC), two transmembrane proteins (MolB) and a solute-binding protein (MolA).

It is found in the periplasm. Its activity is regulated as follows. The MolBCA complex shows a decrease in affinity in the presence of increasing concentrations of substrate and nucleotide. Its function is as follows. Part of the ABC transporter complex MolBCA involved in molybdate import. Functions as a low-affinity molybdate transporter. Binds to both molybdate and tungstate, but not to sulfate or phosphate. In Haemophilus influenzae (strain ATCC 51907 / DSM 11121 / KW20 / Rd), this protein is Molybdate-binding protein MolA.